The chain runs to 140 residues: ATP synthase epsilon chain (140 aa).

This sequence belongs to the ATPase epsilon chain family. F-type ATPases have 2 components, CF(1) - the catalytic core - and CF(0) - the membrane proton channel. CF(1) has five subunits: alpha(3), beta(3), gamma(1), delta(1), epsilon(1). CF(0) has three main subunits: a, b and c.

Its subcellular location is the cell inner membrane. Functionally, produces ATP from ADP in the presence of a proton gradient across the membrane. This Chromobacterium violaceum (strain ATCC 12472 / DSM 30191 / JCM 1249 / CCUG 213 / NBRC 12614 / NCIMB 9131 / NCTC 9757 / MK) protein is ATP synthase epsilon chain.